An 89-amino-acid chain; its full sequence is CRISPR-associated endoribonuclease Cas2 2 (89 aa).

Mg(2+) is bound at residue aspartate 9.

It belongs to the CRISPR-associated endoribonuclease Cas2 protein family. Homodimer, forms a heterotetramer with a Cas1 homodimer. Mg(2+) is required as a cofactor.

CRISPR (clustered regularly interspaced short palindromic repeat), is an adaptive immune system that provides protection against mobile genetic elements (viruses, transposable elements and conjugative plasmids). CRISPR clusters contain sequences complementary to antecedent mobile elements and target invading nucleic acids. CRISPR clusters are transcribed and processed into CRISPR RNA (crRNA). Functions as a ssRNA-specific endoribonuclease. Involved in the integration of spacer DNA into the CRISPR cassette. This chain is CRISPR-associated endoribonuclease Cas2 2, found in Methanospirillum hungatei JF-1 (strain ATCC 27890 / DSM 864 / NBRC 100397 / JF-1).